Here is a 280-residue protein sequence, read N- to C-terminus: Ribosomal RNA small subunit methyltransferase A (280 aa).

His15, Leu17, Gly42, Glu64, Asp89, and Asn109 together coordinate S-adenosyl-L-methionine.

The protein belongs to the class I-like SAM-binding methyltransferase superfamily. rRNA adenine N(6)-methyltransferase family. RsmA subfamily.

It is found in the cytoplasm. The catalysed reaction is adenosine(1518)/adenosine(1519) in 16S rRNA + 4 S-adenosyl-L-methionine = N(6)-dimethyladenosine(1518)/N(6)-dimethyladenosine(1519) in 16S rRNA + 4 S-adenosyl-L-homocysteine + 4 H(+). Its function is as follows. Specifically dimethylates two adjacent adenosines (A1518 and A1519) in the loop of a conserved hairpin near the 3'-end of 16S rRNA in the 30S particle. May play a critical role in biogenesis of 30S subunits. This chain is Ribosomal RNA small subunit methyltransferase A, found in Prochlorococcus marinus (strain MIT 9313).